Reading from the N-terminus, the 87-residue chain is Small ribosomal subunit protein uS15 (87 aa).

It belongs to the universal ribosomal protein uS15 family. Part of the 30S ribosomal subunit. Forms a bridge to the 50S subunit in the 70S ribosome, contacting the 23S rRNA.

Functionally, one of the primary rRNA binding proteins, it binds directly to 16S rRNA where it helps nucleate assembly of the platform of the 30S subunit by binding and bridging several RNA helices of the 16S rRNA. Its function is as follows. Forms an intersubunit bridge (bridge B4) with the 23S rRNA of the 50S subunit in the ribosome. The chain is Small ribosomal subunit protein uS15 from Alkaliphilus metalliredigens (strain QYMF).